The following is a 269-amino-acid chain: Protein NETWORKED 3A (269 aa).

Positions 6–87 (SKWWWIGNHN…ERYDLLRPSS (82 aa)) constitute an NAB domain. Residues 87–113 (SVHKHGSDSESHEKSSTCDESSWSEAC) form a disordered region. A compositionally biased stretch (basic and acidic residues) spans 91–103 (HGSDSESHEKSST). Residues 155–214 (NGNSEMMKIEIERLREENKVYSEMVREKDEEKREAIRQMSVAIQMLKEENSELKKRVTNT) are a coiled coil.

Belongs to the NET family.

Its subcellular location is the cytoplasm. It is found in the cytoskeleton. The protein localises to the nucleus membrane. In terms of biological role, plant-specific actin binding protein. May be part of a membrane-cytoskeletal adapter complex. The polypeptide is Protein NETWORKED 3A (Arabidopsis thaliana (Mouse-ear cress)).